A 458-amino-acid chain; its full sequence is Phenylalanine-specific permease (458 aa).

Topologically, residues 1–27 are cytoplasmic; sequence MKNASTVSEDTASNQEPTLHRGLHNRH. Residues 28-48 traverse the membrane as a helical segment; it reads IQLIALGGAIGTGLFLGIGPA. The Periplasmic segment spans residues 49–50; sequence IQ. Residues 51–71 form a helical membrane-spanning segment; that stretch reads MAGPAVLLGYGVAGIIAFLIM. Topologically, residues 72 to 105 are cytoplasmic; it reads RQLGEMVVEEPVSGSFAHFAYKYWGPFAGFLSGW. The chain crosses the membrane as a helical span at residues 106–126; it reads NYWVMFVLVGMAELTAAGIYM. Topologically, residues 127-132 are periplasmic; it reads QYWFPD. A helical membrane pass occupies residues 133–153; that stretch reads VPTWIWAAAFFIIINAVNLVN. At 154–160 the chain is on the cytoplasmic side; it reads VRLYGET. A helical transmembrane segment spans residues 161–181; sequence EFWFALIKVLAIIGMIGFGLW. The Periplasmic portion of the chain corresponds to 182–196; that stretch reads LLFSGHGGEKASIDN. A helical membrane pass occupies residues 197 to 217; the sequence is LWRYGGFFATGWNGLILSLAV. The Cytoplasmic segment spans residues 218–250; the sequence is IMFSFGGLELIGITAAEARDPEKSIPKAVNQVV. A helical transmembrane segment spans residues 251–271; it reads YRILLFYIGSLVVLLALYPWV. The Periplasmic portion of the chain corresponds to 272–288; it reads EVKSNSSPFVMIFHNLD. A helical membrane pass occupies residues 289-309; that stretch reads SNVVASALNFVILVASLSVYN. The Cytoplasmic segment spans residues 310 to 341; the sequence is SGVYSNSRMLFGLSVQGNAPKFLTRVSRRGVP. A helical membrane pass occupies residues 342–362; the sequence is INSLMLSGAITSLVVLINYLL. The Periplasmic portion of the chain corresponds to 363-367; the sequence is PQKAF. A helical membrane pass occupies residues 368-388; that stretch reads GLLMALVVATLLLNWIMICLA. At 389–411 the chain is on the cytoplasmic side; it reads HLRFRAAMRRQGRETQFKALLYP. Residues 412–432 form a helical membrane-spanning segment; the sequence is FGNYLCIAFLGMILLLMCTMD. Residues 433 to 434 are Periplasmic-facing; the sequence is DM. The chain crosses the membrane as a helical span at residues 435–455; that stretch reads RLSAILLPVWIVFLFMAFKTL. Residues 456–458 lie on the Cytoplasmic side of the membrane; the sequence is RRK.

It belongs to the amino acid-polyamine-organocation (APC) superfamily. Amino acid transporter (AAT) (TC 2.A.3.1) family.

The protein resides in the cell inner membrane. The enzyme catalyses L-phenylalanine(in) + H(+)(in) = L-phenylalanine(out) + H(+)(out). Its function is as follows. Permease that is involved in the active transport across the cytoplasmic membrane of phenylalanine. Can also transport tyrosine, but not tryptophan. The polypeptide is Phenylalanine-specific permease (Escherichia coli (strain K12)).